The primary structure comprises 292 residues: Acidic endochitinase (292 aa).

A signal peptide spans 1–25 (MAAHKITTTLSIFFLLSSIFRSSDA). In terms of domain architecture, GH18 spans 26 to 292 (AGIAIYWGQN…YSDSIKGSIG (267 aa)). Disulfide bonds link Cys-45–Cys-92 and Cys-75–Cys-82. Glu-152 acts as the Proton donor in catalysis. Cys-180 and Cys-209 are joined by a disulfide.

Belongs to the glycosyl hydrolase 18 family. Chitinase class II subfamily.

The protein localises to the secreted. It is found in the extracellular space. It catalyses the reaction Random endo-hydrolysis of N-acetyl-beta-D-glucosaminide (1-&gt;4)-beta-linkages in chitin and chitodextrins.. This protein functions as a defense against chitin containing fungal pathogens. The polypeptide is Acidic endochitinase (Cucumis sativus (Cucumber)).